Reading from the N-terminus, the 396-residue chain is MAVQESAAQLSMTLKVQEYPTLKVPYETLNKRFRAAQKNIDRETSHVTMVVAELEKTLSGCPAVDSVVSLLDGVVEKLSVLKRKAVESIQAEDESAKLCKRRIEHLKEHSSDQPAAASVWKRKRMDRMMVEHLLRCGYYNTAVKLARQSGIEDLVNIEMFLTAKEVEESLERRETATCLAWCHDNKSRLRKMKSCLEFSLRIQEFIELIRQNKRLDAVRHARKHFSQAEGSQLDEVRQAMGMLAFPPDTHISPYKDLLDPARWRMLIQQFRYDNYRLHQLGNNSVFTLTLQAGLSAIKTPQCYKEDGSSKSPDCPVCSRSLNKLAQPLPMAHCANSRLVCKISGDVMNENNPPMMLPNGYVYGYNSLLSIRQDDKVVCPRTKEVFHFSQAEKVYIM.

Residues 1 to 124 (MAVQESAAQL…AAASVWKRKR (124 aa)) form an extracellular and involved in cell to cell contact region. Residue T28 is modified to Phosphothreonine. Residues 121–153 (KRKRMDRMMVEHLLRCGYYNTAVKLARQSGIED) form the LisH domain. In terms of domain architecture, CTLH spans 159–216 (MFLTAKEVEESLERRETATCLAWCHDNKSRLRKMKSCLEFSLRIQEFIELIRQNKRLD). An RING-Gid-type zinc finger spans residues 314–381 (CPVCSRSLNK…QDDKVVCPRT (68 aa)).

Identified in the CTLH complex that contains GID4, RANBP9 and/or RANBP10, MKLN1, MAEA, RMND5A (or alternatively its paralog RMND5B), GID8, ARMC8, WDR26 and YPEL5. Within this complex, MAEA, RMND5A (or alternatively its paralog RMND5B), GID8, WDR26, and RANBP9 and/or RANBP10 form the catalytic core, while GID4, MKLN1, ARMC8 and YPEL5 have ancillary roles. Interacts with F-actin. In terms of processing, autoubiquitinated as component of the CTLH E3 ubiquitin-protein ligase complex (in vitro).

The protein resides in the cytoplasm. It localises to the nucleus. The protein localises to the nucleoplasm. It is found in the nucleus matrix. Its subcellular location is the cell membrane. The protein resides in the cytoskeleton. It carries out the reaction S-ubiquitinyl-[E2 ubiquitin-conjugating enzyme]-L-cysteine + [acceptor protein]-L-lysine = [E2 ubiquitin-conjugating enzyme]-L-cysteine + N(6)-ubiquitinyl-[acceptor protein]-L-lysine.. Functionally, core component of the CTLH E3 ubiquitin-protein ligase complex that selectively accepts ubiquitin from UBE2H and mediates ubiquitination and subsequent proteasomal degradation of the transcription factor HBP1. MAEA and RMND5A are both required for catalytic activity of the CTLH E3 ubiquitin-protein ligase complex. MAEA is required for normal cell proliferation. The CTLH E3 ubiquitin-protein ligase complex is not required for the degradation of enzymes involved in gluconeogenesis, such as FBP1. Plays a role in erythroblast enucleation during erythrocyte maturation and in the development of mature macrophages. Mediates the attachment of erythroid cell to mature macrophages; this MAEA-mediated contact inhibits erythroid cell apoptosis. Participates in erythroblastic island formation, which is the functional unit of definitive erythropoiesis. Associates with F-actin to regulate actin distribution in erythroblasts and macrophages. May contribute to nuclear architecture and cells division events. The chain is E3 ubiquitin-protein transferase MAEA (MAEA) from Pongo abelii (Sumatran orangutan).